A 335-amino-acid chain; its full sequence is Partner of xrn-2 protein 1 (335 aa).

Residues 7 to 91 (VEAEKKLWES…SYVKASAAKK (85 aa)) form the XRN2-binding (XTBD) domain. The tract at residues 95–119 (VKTSDLEGASDESKKVKMEKSPSPV) is disordered. The span at 105-114 (DESKKVKMEK) shows a compositional bias: basic and acidic residues.

As to quaternary structure, interacts (via N-terminus) with xrn-2; the interaction is direct.

Its subcellular location is the nucleus. The protein resides in the nucleolus. The protein localises to the nucleoplasm. Plays a role in maintenance of steady-state concentration and turnover of microRNAs (miRNA) by degradation of mature miRNA in complex with the exoribonuclease xrn-2. Stabilizes and enhances the accumulation and activity of the exoribonuclease xrn-2, and thus contributes to miRNA turnover. The protein is Partner of xrn-2 protein 1 of Caenorhabditis elegans.